Here is a 464-residue protein sequence, read N- to C-terminus: NADH dehydrogenase [ubiquinone] flavoprotein 1, mitochondrial (464 aa).

The transit peptide at 1–20 directs the protein to the mitochondrion; it reads MLAARRLLGGSLPSRVSVRF. N6-acetyllysine; alternate is present on Lys81. Lys81 is subject to N6-succinyllysine; alternate. An NADH-binding site is contributed by 87–96; it reads GRGGAGFPTG. Lys104 is modified (N6-acetyllysine). 199–247 contributes to the FMN binding site; that stretch reads RGAGAYICGEETALIESIEGKQGKPRLKPPFPADVGVFGCPTTVANVET. Residue Arg257 is modified to Omega-N-methylarginine. Position 375 is an N6-acetyllysine (Lys375). [4Fe-4S] cluster is bound by residues Cys379, Cys382, Cys385, and Cys425.

The protein belongs to the complex I 51 kDa subunit family. Core subunit of respiratory chain NADH dehydrogenase (Complex I) which is composed of 45 different subunits. This is a component of the flavoprotein-sulfur (FP) fragment of the enzyme. Interacts with RAB5IF. It depends on FMN as a cofactor. [4Fe-4S] cluster is required as a cofactor.

The protein localises to the mitochondrion inner membrane. It catalyses the reaction a ubiquinone + NADH + 5 H(+)(in) = a ubiquinol + NAD(+) + 4 H(+)(out). In terms of biological role, core subunit of the mitochondrial membrane respiratory chain NADH dehydrogenase (Complex I) which catalyzes electron transfer from NADH through the respiratory chain, using ubiquinone as an electron acceptor. Part of the peripheral arm of the enzyme, where the electrons from NADH are accepted by flavin mononucleotide (FMN) and then passed along a chain of iron-sulfur clusters by electron tunnelling to the final acceptor ubiquinone. Contains FMN, which is the initial electron acceptor as well as one iron-sulfur cluster. This chain is NADH dehydrogenase [ubiquinone] flavoprotein 1, mitochondrial, found in Macaca fascicularis (Crab-eating macaque).